The sequence spans 366 residues: Ribosomal RNA large subunit methyltransferase M (366 aa).

S-adenosyl-L-methionine contacts are provided by residues Ser-188, 221–224 (CPGG), Asp-240, Asp-260, and Asp-277. Lys-306 acts as the Proton acceptor in catalysis.

Belongs to the class I-like SAM-binding methyltransferase superfamily. RNA methyltransferase RlmE family. RlmM subfamily. Monomer.

The protein localises to the cytoplasm. The enzyme catalyses cytidine(2498) in 23S rRNA + S-adenosyl-L-methionine = 2'-O-methylcytidine(2498) in 23S rRNA + S-adenosyl-L-homocysteine + H(+). Functionally, catalyzes the 2'-O-methylation at nucleotide C2498 in 23S rRNA. This Salmonella heidelberg (strain SL476) protein is Ribosomal RNA large subunit methyltransferase M.